We begin with the raw amino-acid sequence, 198 residues long: ATP-dependent Clp protease proteolytic subunit 1 (198 aa).

Ser-98 functions as the Nucleophile in the catalytic mechanism. Residue His-123 is part of the active site.

Belongs to the peptidase S14 family. As to quaternary structure, fourteen ClpP subunits assemble into 2 heptameric rings which stack back to back to give a disk-like structure with a central cavity, resembling the structure of eukaryotic proteasomes.

The protein localises to the cytoplasm. The enzyme catalyses Hydrolysis of proteins to small peptides in the presence of ATP and magnesium. alpha-casein is the usual test substrate. In the absence of ATP, only oligopeptides shorter than five residues are hydrolyzed (such as succinyl-Leu-Tyr-|-NHMec, and Leu-Tyr-Leu-|-Tyr-Trp, in which cleavage of the -Tyr-|-Leu- and -Tyr-|-Trp bonds also occurs).. Its function is as follows. Cleaves peptides in various proteins in a process that requires ATP hydrolysis. Has a chymotrypsin-like activity. Plays a major role in the degradation of misfolded proteins. ClpXP1 is involved in the complete degradation of the Site-2 clipped anti-sigma-W factor RsiW. This results in the release of SigW and the transcription activation of the genes under the control of the sigma-W factor. This chain is ATP-dependent Clp protease proteolytic subunit 1, found in Bacillus licheniformis (strain ATCC 14580 / DSM 13 / JCM 2505 / CCUG 7422 / NBRC 12200 / NCIMB 9375 / NCTC 10341 / NRRL NRS-1264 / Gibson 46).